A 382-amino-acid polypeptide reads, in one-letter code: Alkanesulfonate monooxygenase (382 aa).

This sequence belongs to the SsuD family.

It carries out the reaction an alkanesulfonate + FMNH2 + O2 = an aldehyde + FMN + sulfite + H2O + 2 H(+). Catalyzes the desulfonation of aliphatic sulfonates. This Pseudomonas putida (strain ATCC 47054 / DSM 6125 / CFBP 8728 / NCIMB 11950 / KT2440) protein is Alkanesulfonate monooxygenase.